A 146-amino-acid chain; its full sequence is Putative type II restriction enzyme MjaORF1200P (146 aa).

To A.pernix APE2001.

It catalyses the reaction Endonucleolytic cleavage of DNA to give specific double-stranded fragments with terminal 5'-phosphates.. In terms of biological role, a putative type II restriction enzyme, its methylase would be M.MjaORF1200P (AC Q58600). This is Putative type II restriction enzyme MjaORF1200P from Methanocaldococcus jannaschii (strain ATCC 43067 / DSM 2661 / JAL-1 / JCM 10045 / NBRC 100440) (Methanococcus jannaschii).